We begin with the raw amino-acid sequence, 324 residues long: Phospho-N-acetylmuramoyl-pentapeptide-transferase (324 aa).

Helical transmembrane passes span 5-25 (VILFTAGLAFIITVVLSPIFI), 55-75 (GGLMILLSLSITTWLMSDIFF), 81-101 (TYMLLFVTVGYGLLGFIDDFI), 122-142 (LIALIFYFFFQHYSMSTVVSI), 147-167 (VSLDLGVAYVLLIIFMLVGGS), 176-196 (LDGLLAGTAAIAFGAYAVLAW), 203-223 (VAIFSVAVVGAVLGFLVFNAH), 227-247 (VFMGDTGSLALGGAIVTIAIL), 250-270 (LEILLVIIGGVFVIETLSVII), and 302-322 (VVVTFWAVGLLFAILGIYIEV).

This sequence belongs to the glycosyltransferase 4 family. MraY subfamily. It depends on Mg(2+) as a cofactor.

It localises to the cell membrane. It catalyses the reaction UDP-N-acetyl-alpha-D-muramoyl-L-alanyl-gamma-D-glutamyl-meso-2,6-diaminopimeloyl-D-alanyl-D-alanine + di-trans,octa-cis-undecaprenyl phosphate = di-trans,octa-cis-undecaprenyl diphospho-N-acetyl-alpha-D-muramoyl-L-alanyl-D-glutamyl-meso-2,6-diaminopimeloyl-D-alanyl-D-alanine + UMP. Its pathway is cell wall biogenesis; peptidoglycan biosynthesis. In terms of biological role, catalyzes the initial step of the lipid cycle reactions in the biosynthesis of the cell wall peptidoglycan: transfers peptidoglycan precursor phospho-MurNAc-pentapeptide from UDP-MurNAc-pentapeptide onto the lipid carrier undecaprenyl phosphate, yielding undecaprenyl-pyrophosphoryl-MurNAc-pentapeptide, known as lipid I. The chain is Phospho-N-acetylmuramoyl-pentapeptide-transferase from Anoxybacillus flavithermus (strain DSM 21510 / WK1).